Reading from the N-terminus, the 582-residue chain is ATP-dependent lipid A-core flippase (582 aa).

Helical transmembrane passes span 25–45, 69–89, 137–159, 253–273, and 275–295; these read AGLI…TFML, LAVI…SYCI, ASSS…LFIM, PIIQ…ASFP, and VMET…IALM. One can recognise an ABC transmembrane type-1 domain in the interval 28 to 310; sequence IVAAIALILN…LTNVNTQFQR (283 aa). The 237-residue stretch at 342–578 folds into the ABC transporter domain; sequence IEFRHVTFYY…QGVYAQLNRM (237 aa). 376 to 383 contacts ATP; it reads GRSGSGKS.

This sequence belongs to the ABC transporter superfamily. Lipid exporter (TC 3.A.1.106) family. Homodimer.

It localises to the cell inner membrane. It carries out the reaction ATP + H2O + lipid A-core oligosaccharideSide 1 = ADP + phosphate + lipid A-core oligosaccharideSide 2.. In terms of biological role, involved in lipopolysaccharide (LPS) biosynthesis. Translocates lipid A-core from the inner to the outer leaflet of the inner membrane. Transmembrane domains (TMD) form a pore in the inner membrane and the ATP-binding domain (NBD) is responsible for energy generation. This Yersinia pestis bv. Antiqua (strain Antiqua) protein is ATP-dependent lipid A-core flippase.